Reading from the N-terminus, the 200-residue chain is Lipopolysaccharide core heptose(II)-phosphate phosphatase (200 aa).

Positions 1–25 are cleaved as a signal peptide; that stretch reads MLAFCRSSLKSKKYFIILLALAAIA.

The protein belongs to the phosphoglycerate mutase family. Ais subfamily.

The protein localises to the periplasm. The protein operates within bacterial outer membrane biogenesis; lipopolysaccharide metabolism. Functionally, catalyzes the dephosphorylation of heptose(II) of the outer membrane lipopolysaccharide core. This chain is Lipopolysaccharide core heptose(II)-phosphate phosphatase, found in Escherichia coli O157:H7.